We begin with the raw amino-acid sequence, 615 residues long: Chaperone protein DnaK (615 aa).

Phosphothreonine; by autocatalysis is present on Thr-175. The disordered stretch occupies residues 573–615 (SQEMYQKAAQEQQAAQGAEQAQDNGPKDDNVVDADFKEVDEDK). Positions 580–594 (AAQEQQAAQGAEQAQ) are enriched in low complexity. Residues 597–609 (GPKDDNVVDADFK) show a composition bias toward basic and acidic residues.

This sequence belongs to the heat shock protein 70 family.

Acts as a chaperone. In Clostridioides difficile (strain 630) (Peptoclostridium difficile), this protein is Chaperone protein DnaK.